The following is a 678-amino-acid chain: Glutamic acid-rich protein (678 aa).

The N-terminal stretch at 1 to 25 (MNVLFLSYNICILFFVVCTLNFSTK) is a signal peptide. The segment covering 56–79 (EKNKDDNSKSETLLKEEKDEKDDV) has biased composition (basic and acidic residues). Disordered stretches follow at residues 56 to 194 (EKNK…NLDE), 225 to 445 (ISSV…VVKN), and 520 to 678 (VVPR…NAKI). Residues 80–107 (PTTSNDNLKNAHNNNEISSSTDPTNIIN) are compositionally biased toward polar residues. Residues 109–120 (NDKDNENSVDKK) show a composition bias toward basic and acidic residues. Tandem repeats lie at residues 120–122 (KKD), 123–125 (KKE), 126–128 (KKH), 129–131 (KKD), 132–134 (KKE), 135–137 (KKE), 138–140 (KKD), 141–143 (KKE), 144–146 (KKD), 147–149 (KKE), 150–152 (KKH), 153–155 (KKE), 156–158 (KKH), 159–161 (KKD), and 162–164 (KKK). The interval 120–164 (KKDKKEKKHKKDKKEKKEKKDKKEKKDKKEKKHKKEKKHKKDKKK) is 15 X 3 AA tandem repeats of K-K-[DEHK]. Residues 121-165 (KDKKEKKHKKDKKEKKEKKDKKEKKDKKEKKHKKEKKHKKDKKKK) are compositionally biased toward basic residues. Composition is skewed to basic and acidic residues over residues 231 to 329 (TSND…EEKE) and 371 to 411 (PEEH…EHKS). Repeat copies occupy residues 372-376 (EEHKE), 377-381 (GEHKE), 382-386 (EEHKE), 387-391 (GEHKE), 392-396 (GEHKE), 397-401 (EEHKE), 402-406 (EEHKK), 407-411 (EEHKS), 412-416 (KEHKS), 417-421 (KGKKD), 422-426 (KGKKD), 427-431 (KGKHK), 432-436 (KAKKE), and 437-441 (KVKKH). Residues 372-416 (EEHKEGEHKEEEHKEGEHKEGEHKEEEHKEEEHKKEEHKSKEHKS) are 9 X 5 AA tandem repeats of [EGK]-E-H-K-[EKS]. Residues 412–443 (KEHKSKGKKDKGKKDKGKHKKAKKEKVKKHVV) are compositionally biased toward basic residues. The 5 X 5 AA tandem repeats of K-[GAV]-K-[KH]-[DKEH] stretch occupies residues 417–441 (KGKKDKGKKDKGKHKKAKKEKVKKH). Positions 532–565 (AKIEEAELQKQKHVDKEEDKKEESKEVQEESKEV) are enriched in basic and acidic residues. Residues 566–663 (QEDEEEVEED…EEEEEEEEEE (98 aa)) are compositionally biased toward acidic residues. Over residues 667 to 678 (KIKRNLRKNAKI) the composition is skewed to basic residues.

This Plasmodium falciparum (isolate FC27 / Papua New Guinea) protein is Glutamic acid-rich protein (GARP).